The chain runs to 355 residues: Probable GTP 3',8-cyclase (355 aa).

Positions 5–233 constitute a Radical SAM core domain; it reads AYGRPLKDLR…GRLHNRRVYR (229 aa). Residue arginine 14 participates in GTP binding. The [4Fe-4S] cluster site is built by cysteine 21, cysteine 25, and cysteine 28. A GTP-binding site is contributed by lysine 69. Residue glycine 73 coordinates S-adenosyl-L-methionine. Residue threonine 97 participates in GTP binding. Residue serine 121 coordinates S-adenosyl-L-methionine. A GTP-binding site is contributed by lysine 157. [4Fe-4S] cluster is bound by residues cysteine 252 and cysteine 255. 257 to 259 serves as a coordination point for GTP; it reads RVR. Cysteine 269 is a [4Fe-4S] cluster binding site.

It belongs to the radical SAM superfamily. MoaA family. Requires [4Fe-4S] cluster as cofactor.

It catalyses the reaction GTP + AH2 + S-adenosyl-L-methionine = (8S)-3',8-cyclo-7,8-dihydroguanosine 5'-triphosphate + 5'-deoxyadenosine + L-methionine + A + H(+). The protein operates within cofactor biosynthesis; molybdopterin biosynthesis. In terms of biological role, catalyzes the cyclization of GTP to (8S)-3',8-cyclo-7,8-dihydroguanosine 5'-triphosphate. The protein is Probable GTP 3',8-cyclase of Aeropyrum pernix (strain ATCC 700893 / DSM 11879 / JCM 9820 / NBRC 100138 / K1).